We begin with the raw amino-acid sequence, 39 residues long: Photosystem I reaction center subunit IX (39 aa).

The helical transmembrane segment at phenylalanine 7–isoleucine 27 threads the bilayer.

This sequence belongs to the PsaJ family.

It localises to the cellular thylakoid membrane. Functionally, may help in the organization of the PsaE and PsaF subunits. In Synechococcus sp. (strain JA-3-3Ab) (Cyanobacteria bacterium Yellowstone A-Prime), this protein is Photosystem I reaction center subunit IX.